A 130-amino-acid chain; its full sequence is Glutamate-rich protein 4 (130 aa).

A compositionally biased stretch (acidic residues) spans 91–104 (EEEEESSKEEEEDQ). The interval 91-130 (EEEEESSKEEEEDQEPQRKQEEEHLEACPAPHPPDFEMMI) is disordered. Residues 105-116 (EPQRKQEEEHLE) show a composition bias toward basic and acidic residues.

The chain is Glutamate-rich protein 4 (ERICH4) from Homo sapiens (Human).